The primary structure comprises 231 residues: MNRFICVLALSGSAVLAGCVAPPPKPNDPYYAPVLPRTPLPSASNNGSIYQAGFEQNLYSDRKAFRVGDIITITLNERTNASKGANSALTKTSSNSIGLTSLFGAVPNTNNPLGDGDLTLNAGYSGNRATKGDSKAAQSNSLTGSITVTVADVLPNGIIAVRGEKWMTLNTGDELVRIAGLVRADDIATDNTVSSTRVADARITYSGTGSFADANQPGWFDRFFLSPLFPF.

A signal peptide spans 1–18; sequence MNRFICVLALSGSAVLAG. Cys19 carries the N-palmitoyl cysteine lipid modification. The S-diacylglycerol cysteine moiety is linked to residue Cys19.

This sequence belongs to the FlgH family. As to quaternary structure, the basal body constitutes a major portion of the flagellar organelle and consists of four rings (L,P,S, and M) mounted on a central rod.

The protein resides in the cell outer membrane. It is found in the bacterial flagellum basal body. Assembles around the rod to form the L-ring and probably protects the motor/basal body from shearing forces during rotation. This Pseudomonas fluorescens (strain ATCC BAA-477 / NRRL B-23932 / Pf-5) protein is Flagellar L-ring protein.